Reading from the N-terminus, the 397-residue chain is Ribosomal RNA large subunit methyltransferase I (397 aa).

The PUA domain occupies 2-81; sequence SAQVILQPSR…ESIDNGFFLR (80 aa).

The protein belongs to the methyltransferase superfamily. RlmI family.

The protein resides in the cytoplasm. It catalyses the reaction cytidine(1962) in 23S rRNA + S-adenosyl-L-methionine = 5-methylcytidine(1962) in 23S rRNA + S-adenosyl-L-homocysteine + H(+). Functionally, specifically methylates the cytosine at position 1962 (m5C1962) of 23S rRNA. This Alteromonas mediterranea (strain DSM 17117 / CIP 110805 / LMG 28347 / Deep ecotype) protein is Ribosomal RNA large subunit methyltransferase I.